We begin with the raw amino-acid sequence, 60 residues long: Large ribosomal subunit protein uL30 (60 aa).

Belongs to the universal ribosomal protein uL30 family. Part of the 50S ribosomal subunit.

The sequence is that of Large ribosomal subunit protein uL30 from Limosilactobacillus reuteri (strain DSM 20016) (Lactobacillus reuteri).